A 194-amino-acid chain; its full sequence is Large ribosomal subunit protein eL15 (194 aa).

Positions Ala165–Lys194 are disordered. Residues Lys167 to Gly176 are compositionally biased toward basic residues. Residues Lys177–Lys194 show a composition bias toward basic and acidic residues.

This sequence belongs to the eukaryotic ribosomal protein eL15 family. In terms of assembly, part of the 50S ribosomal subunit.

The sequence is that of Large ribosomal subunit protein eL15 from Pyrococcus furiosus (strain ATCC 43587 / DSM 3638 / JCM 8422 / Vc1).